We begin with the raw amino-acid sequence, 29 residues long: Cyclotide mobo-B (29 aa).

A cross-link (cyclopeptide (Gly-Asn)) is located at residues glycine 1–asparagine 29. 3 disulfide bridges follow: cysteine 5/cysteine 19, cysteine 9/cysteine 21, and cysteine 14/cysteine 26.

Belongs to the cyclotide family. In terms of processing, this is a cyclic peptide.

Probably participates in a plant defense mechanism. The protein is Cyclotide mobo-B of Melicytus obovatus (Hymenanthera obovata).